We begin with the raw amino-acid sequence, 310 residues long: tRNA uridine(34) hydroxylase (310 aa).

The Rhodanese domain maps to 124–218 (SDPEVLLIDT…YFEEVPQEES (95 aa)). Cysteine 178 functions as the Cysteine persulfide intermediate in the catalytic mechanism.

This sequence belongs to the TrhO family.

It catalyses the reaction uridine(34) in tRNA + AH2 + O2 = 5-hydroxyuridine(34) in tRNA + A + H2O. In terms of biological role, catalyzes oxygen-dependent 5-hydroxyuridine (ho5U) modification at position 34 in tRNAs. The sequence is that of tRNA uridine(34) hydroxylase from Pseudomonas putida (strain GB-1).